The primary structure comprises 196 residues: Ribosomal RNA large subunit methyltransferase E (196 aa).

Residues G52, W54, D72, D88, and D111 each coordinate S-adenosyl-L-methionine. The active-site Proton acceptor is K151.

The protein belongs to the class I-like SAM-binding methyltransferase superfamily. RNA methyltransferase RlmE family.

It is found in the cytoplasm. It carries out the reaction uridine(2552) in 23S rRNA + S-adenosyl-L-methionine = 2'-O-methyluridine(2552) in 23S rRNA + S-adenosyl-L-homocysteine + H(+). Specifically methylates the uridine in position 2552 of 23S rRNA at the 2'-O position of the ribose in the fully assembled 50S ribosomal subunit. This Cenarchaeum symbiosum (strain A) protein is Ribosomal RNA large subunit methyltransferase E.